The following is a 185-amino-acid chain: Small ribosomal subunit protein uS4c (185 aa).

Positions 72-134 (MRLDNVIFRL…PTSCNALKGE (63 aa)) constitute an S4 RNA-binding domain. Positions 132 to 154 (KGESPGGGETPDHLTASLSEGSR) are disordered.

It belongs to the universal ribosomal protein uS4 family. Part of the 30S ribosomal subunit. Contacts protein S5. The interaction surface between S4 and S5 is involved in control of translational fidelity.

It localises to the plastid. It is found in the chloroplast. In terms of biological role, one of the primary rRNA binding proteins, it binds directly to 16S rRNA where it nucleates assembly of the body of the 30S subunit. Its function is as follows. With S5 and S12 plays an important role in translational accuracy. In Woodwardia unigemmata (Chainfern), this protein is Small ribosomal subunit protein uS4c (rps4).